We begin with the raw amino-acid sequence, 202 residues long: Neuroligin-3 (202 aa).

Topologically, residues 1–202 (RYGSPTYFYA…TGTRMQGHSW (202 aa)) are extracellular. The cysteines at positions 15 and 49 are disulfide-linked. An N-linked (GlcNAc...) asparagine glycan is attached at Asn50. The disordered stretch occupies residues 154 to 202 (LRIPPTAPTSPAGPMARPGAPSGQPSHLPTATRMPRGPGTGTRMQGHSW).

Belongs to the type-B carboxylesterase/lipase family. As to quaternary structure, homodimer, and heterodimer with NLGN1 and NLGN2. Interacts with neurexins NRXN1, NRXN2 and NRXN3. Interaction with neurexins is mediated by heparan sulfate glycan modification on neurexin. Interacts (via its C-terminus) with DLG4/PSD-95 (via PDZ domain 3).

It is found in the cell membrane. The protein localises to the synapse. Functionally, cell surface protein involved in cell-cell-interactions via its interactions with neurexin family members. Plays a role in synapse function and synaptic signal transmission, and probably mediates its effects by recruiting and clustering other synaptic proteins. May promote the initial formation of synapses, but is not essential for this. May also play a role in glia-glia or glia-neuron interactions in the developing peripheral nervous system. This chain is Neuroligin-3 (NLGN3), found in Macaca mulatta (Rhesus macaque).